The chain runs to 258 residues: UPF0246 protein YaaA (258 aa).

Belongs to the UPF0246 family.

The polypeptide is UPF0246 protein YaaA (Escherichia coli (strain 55989 / EAEC)).